We begin with the raw amino-acid sequence, 480 residues long: MVSKPFQRPFSLATRLTFFISLATIAAFFAFAWIMIHSVKVHFAEQDINDLKEISATLERVLNHPDETQARRLMTLEDIVSGYSNVLISLADSQGKTVYHSPGAPDIREFTRDAIPDKDAQGGEVYLLSGPTMMMPGHGHGHMEHSNWRMINLPVGPLVDGKPIYTLYIALSIDFHLHYINDLMNKLIMTASVISILIVFIVLLAVHKGHAPIRSVSRQIQNITSKDLDVRLDPQTVPIELEQLVLSFNHMIERIEDVFTRQSNFSADIAHEIRTPITNLITQTEIALSQSRSQKELEDVLYSNLEELTRMAKMVSDMLFLAQADNNQLIPEKKMLNLADEVGKVFDFFEALAEDRGVELRFVGDKCQVAGDPLMLRRALSNLLSNALRYTPTGETIVVRCQTVDHLVQVIVENPGTPIAPEHLPRLFDRFYRVDPSRQRKGEGSGIGLAIVKSIVVAHKGTVAVTSDARGTRFVITLPA.

The Cytoplasmic segment spans residues 1–15 (MVSKPFQRPFSLATR). A helical transmembrane segment spans residues 16–36 (LTFFISLATIAAFFAFAWIMI). The Periplasmic portion of the chain corresponds to 37–186 (HSVKVHFAEQ…LHYINDLMNK (150 aa)). Residues 187 to 207 (LIMTASVISILIVFIVLLAVH) traverse the membrane as a helical segment. One can recognise an HAMP domain in the interval 208 to 260 (KGHAPIRSVSRQIQNITSKDLDVRLDPQTVPIELEQLVLSFNHMIERIEDVFT). Topologically, residues 208–480 (KGHAPIRSVS…GTRFVITLPA (273 aa)) are cytoplasmic. One can recognise a Histidine kinase domain in the interval 268-480 (DIAHEIRTPI…GTRFVITLPA (213 aa)). The residue at position 271 (H271) is a Phosphohistidine; by autocatalysis.

In terms of processing, autophosphorylated.

The protein resides in the cell inner membrane. It catalyses the reaction ATP + protein L-histidine = ADP + protein N-phospho-L-histidine.. Its function is as follows. Member of the two-component regulatory system CusS/CusR involved in response to copper and silver. Acts as a copper/silver ion sensor. Activates CusR by phosphorylation. This Escherichia coli (strain K12) protein is Sensor histidine kinase CusS (cusS).